A 103-amino-acid chain; its full sequence is Acylphosphatase-2 (103 aa).

Ser2 is subject to N-acetylserine. The Acylphosphatase-like domain occupies 13-103 (SVDYEVFGRV…LDFSGFSTRY (91 aa)). Active-site residues include Arg28 and Asn46.

It belongs to the acylphosphatase family.

The catalysed reaction is an acyl phosphate + H2O = a carboxylate + phosphate + H(+). In terms of biological role, its physiological role is not yet clear. The sequence is that of Acylphosphatase-2 (ACYP2) from Gallus gallus (Chicken).